Consider the following 747-residue polypeptide: Transcription factor phm2 (747 aa).

The segment at residues 21 to 50 is a DNA-binding region (zn(2)-C6 fungal-type); it reads CNACRKRKRVRCDRLHPCSNCASRGLGSTC. Disordered stretches follow at residues 112–150 and 414–436; these read GLQN…DHGS and TAEP…PESR.

The protein localises to the nucleus. Functionally, transcription factor that regulates the expression of the gene cluster that mediates the biosynthesis of the trans-fused decalin-containing tetramic acid phomasetin. The chain is Transcription factor phm2 from Pyrenochaetopsis sp.